The primary structure comprises 448 residues: tRNA modification GTPase MnmE (448 aa).

Positions 24, 81, and 120 each coordinate (6S)-5-formyl-5,6,7,8-tetrahydrofolate. A TrmE-type G domain is found at 216–373 (GLNVVLVGAP…LKRTLLREAG (158 aa)). A K(+)-binding site is contributed by Asn226. GTP is bound by residues 226–231 (NVGKSS), 245–251 (TDIAGTT), and 270–273 (DTAG). Ser230 is a Mg(2+) binding site. K(+) is bound by residues Thr245, Ile247, and Thr250. Thr251 is a Mg(2+) binding site. Lys448 lines the (6S)-5-formyl-5,6,7,8-tetrahydrofolate pocket.

This sequence belongs to the TRAFAC class TrmE-Era-EngA-EngB-Septin-like GTPase superfamily. TrmE GTPase family. As to quaternary structure, homodimer. Heterotetramer of two MnmE and two MnmG subunits. It depends on K(+) as a cofactor.

It localises to the cytoplasm. In terms of biological role, exhibits a very high intrinsic GTPase hydrolysis rate. Involved in the addition of a carboxymethylaminomethyl (cmnm) group at the wobble position (U34) of certain tRNAs, forming tRNA-cmnm(5)s(2)U34. The sequence is that of tRNA modification GTPase MnmE from Neisseria meningitidis serogroup C (strain 053442).